A 296-amino-acid polypeptide reads, in one-letter code: Cytidine deaminase (296 aa).

2 CMP/dCMP-type deaminase domains span residues serine 52 to aspartate 167 and glutamine 191 to leucine 296. Residue asparagine 93–glutamate 95 participates in substrate binding. Histidine 106 contacts Zn(2+). The active-site Proton donor is glutamate 108. Positions 133 and 136 each coordinate Zn(2+).

It belongs to the cytidine and deoxycytidylate deaminase family. In terms of assembly, homodimer. It depends on Zn(2+) as a cofactor.

It catalyses the reaction cytidine + H2O + H(+) = uridine + NH4(+). The enzyme catalyses 2'-deoxycytidine + H2O + H(+) = 2'-deoxyuridine + NH4(+). Functionally, this enzyme scavenges exogenous and endogenous cytidine and 2'-deoxycytidine for UMP synthesis. In Mannheimia succiniciproducens (strain KCTC 0769BP / MBEL55E), this protein is Cytidine deaminase.